Reading from the N-terminus, the 901-residue chain is Probable inorganic carbon transporter subunit DabA (901 aa).

Positions 424, 426, 606, and 621 each coordinate Zn(2+).

Belongs to the inorganic carbon transporter (TC 9.A.2) DabA family. As to quaternary structure, forms a complex with DabB. Zn(2+) serves as cofactor.

Its subcellular location is the cell membrane. Part of an energy-coupled inorganic carbon pump. The polypeptide is Probable inorganic carbon transporter subunit DabA (Staphylococcus aureus (strain MSSA476)).